Here is a 122-residue protein sequence, read N- to C-terminus: Large ribosomal subunit protein uL14 (122 aa).

It belongs to the universal ribosomal protein uL14 family. As to quaternary structure, part of the 50S ribosomal subunit. Forms a cluster with proteins L3 and L19. In the 70S ribosome, L14 and L19 interact and together make contacts with the 16S rRNA in bridges B5 and B8.

Binds to 23S rRNA. Forms part of two intersubunit bridges in the 70S ribosome. The protein is Large ribosomal subunit protein uL14 of Oleidesulfovibrio alaskensis (strain ATCC BAA-1058 / DSM 17464 / G20) (Desulfovibrio alaskensis).